We begin with the raw amino-acid sequence, 113 residues long: MNRLDFVDQASLRDDIPVFGPGDTVNVHVKVIEGAKERIQVFKGVVIRRQGGGVRETFTVRKESYGVGVERTFPVHSPNIDHIQVVTRGDVRRAKLYYLRELRGKKAKIKEKR.

This sequence belongs to the bacterial ribosomal protein bL19 family.

Its function is as follows. This protein is located at the 30S-50S ribosomal subunit interface and may play a role in the structure and function of the aminoacyl-tRNA binding site. In Mycobacterium avium (strain 104), this protein is Large ribosomal subunit protein bL19.